The primary structure comprises 502 residues: Ubiquitin-associated protein 1 (502 aa).

The segment at 1–95 is interaction with ESCRT-I; the sequence is MASKKLGTDV…AEAKVNSKSG (95 aa). In terms of domain architecture, UMA spans 17–63; the sequence is LDDVPFKIGDKFKTPAKVGLPIGFSLPDCLQVVREMQYDFSLEKKTI. Residues 80–100 show a composition bias toward basic and acidic residues; the sequence is ERKAEEAEAKVNSKSGPEGDS. Disordered regions lie at residues 80–117 and 135–156; these read ERKA…PPPI and VSSS…DFNP. Phosphoserine is present on residues serine 146, serine 205, and serine 289. An interaction with PTPN23 region spans residues 260–290; it reads VSNIKSLSFPKLDSDDSNQKTVKLASTFHST. UBA domains are found at residues 389 to 430 and 451 to 498; these read SPSE…LFAH and QCSE…LMAR.

As to quaternary structure, component of an ESCRT-I complex (endosomal sorting complex required for transport I) which consists of TSG101, VPS28, VPS37A and UBAP1 in a 1:1:1:1 stoichiometry. Interacts with PTPN23. Interacts (via UBA domains) with ubiquitinated proteins. Ubiquitous. Highly expressed in heart, liver, brain, kidney, spleen, skeletal muscle, stomach, testis and lung.

Its subcellular location is the cytoplasm. It is found in the cytosol. The protein localises to the endosome. Its function is as follows. Component of the ESCRT-I complex, a regulator of vesicular trafficking process. Binds to ubiquitinated cargo proteins and is required for the sorting of endocytic ubiquitinated cargos into multivesicular bodies (MVBs). Plays a role in the proteasomal degradation of ubiquitinated cell-surface proteins, such as EGFR and BST2. This chain is Ubiquitin-associated protein 1, found in Mus musculus (Mouse).